We begin with the raw amino-acid sequence, 116 residues long: Large ribosomal subunit protein bL19 (116 aa).

Belongs to the bacterial ribosomal protein bL19 family.

Functionally, this protein is located at the 30S-50S ribosomal subunit interface and may play a role in the structure and function of the aminoacyl-tRNA binding site. The chain is Large ribosomal subunit protein bL19 from Streptomyces griseus subsp. griseus (strain JCM 4626 / CBS 651.72 / NBRC 13350 / KCC S-0626 / ISP 5235).